A 255-amino-acid polypeptide reads, in one-letter code: MALPDFSMRQLLEAGVHFGHQTHRWNPKMKPYIFGDRNNIHIIDLAQTVPMLSRALQVVSDTVARGGRVLFVGTKRQASEIIADSAKRSAQYYVNSRWLGGMMTNWKTISNSIQRLRKLDEILNGEAQGFTKKERLNLEREREKLDKALGGIRDMGGTPDLMFIIDTNKEKIAIDEAKRLGIPVVAIIDSNCDPDLIDYPIPGNDDASRAIALYCELISRAAIDGIARQQGSSGRDLGASSEVPVEPALEEAAEG.

Residues 230 to 255 (QGSSGRDLGASSEVPVEPALEEAAEG) are disordered.

This sequence belongs to the universal ribosomal protein uS2 family.

The protein is Small ribosomal subunit protein uS2 of Rhizobium johnstonii (strain DSM 114642 / LMG 32736 / 3841) (Rhizobium leguminosarum bv. viciae).